Consider the following 492-residue polypeptide: MANHPLSSSRSNRPFFVRSLAGHTSNLIIPDEFFTAHLEGKTGLTKLKLTSDASDRIWDVRLNGRRFAGGWDDFSAAHCLRDDDVLVFRLDVKMVFHVTPSGRSFSQIRTSSSSGDYDSDDDDDEAGDDDSDSKNISLKKKSRFEAESSSSEKYCLLGLTASNLRLNRVSFTKHFSRANGLTKRCCMIDLMNLSGESWTLGLRHNKRTGQAFIRGRWRSFCHANELKPGSFYRFKLVRNGTRPLLQLCFKVIPQGNCSNSKANGKANVSEKYSREDGSASTKQNKFLTVTLKHYMIQSGQLRLRRSFVRENGIKEAEEIILVDKNGVEWPSYVSSSKQRREFYMAHGWIRFCEANKLKTGETFTLEFVRGEGTTPMLKFCSEAKIEQEEAPEERGTPLPKRARVSAEVGHSRRTQAPNKSSDDPKILQRKQPLQPCSFSDQAKKVKQSIVNILTGIKRFRSELELKERNLEAALLEIDALGDKVSEINKILK.

Residues 12–104 (NRPFFVRSLA…VFHVTPSGRS (93 aa)) constitute a DNA-binding region (TF-B3 1). Positions 105-116 (FSQIRTSSSSGD) are enriched in low complexity. A disordered region spans residues 105–134 (FSQIRTSSSSGDYDSDDDDDEAGDDDSDSK). The span at 117–131 (YDSDDDDDEAGDDDS) shows a compositional bias: acidic residues. DNA-binding regions (TF-B3) lie at residues 154–250 (YCLL…LCFK) and 286–382 (FLTV…FCSE). Basic and acidic residues predominate over residues 385–395 (IEQEEAPEERG). A disordered region spans residues 385 to 427 (IEQEEAPEERGTPLPKRARVSAEVGHSRRTQAPNKSSDDPKIL).

The protein resides in the nucleus. This Arabidopsis thaliana (Mouse-ear cress) protein is B3 domain-containing protein REM3 (REM3).